We begin with the raw amino-acid sequence, 342 residues long: Ribosomal RNA small subunit methyltransferase C (342 aa).

The protein belongs to the methyltransferase superfamily. RsmC family. In terms of assembly, monomer.

Its subcellular location is the cytoplasm. The enzyme catalyses guanosine(1207) in 16S rRNA + S-adenosyl-L-methionine = N(2)-methylguanosine(1207) in 16S rRNA + S-adenosyl-L-homocysteine + H(+). Its function is as follows. Specifically methylates the guanine in position 1207 of 16S rRNA in the 30S particle. This Salmonella gallinarum (strain 287/91 / NCTC 13346) protein is Ribosomal RNA small subunit methyltransferase C.